We begin with the raw amino-acid sequence, 59 residues long: Large ribosomal subunit protein bL33 (59 aa).

Belongs to the bacterial ribosomal protein bL33 family.

The protein is Large ribosomal subunit protein bL33 of Neorickettsia sennetsu (strain ATCC VR-367 / Miyayama) (Ehrlichia sennetsu).